The chain runs to 1333 residues: Protein grainyhead (1333 aa).

5 disordered regions span residues 52 to 93 (SLSP…DSPQ), 439 to 598 (LLGS…PGAR), 617 to 655 (QTSH…GPYI), 727 to 784 (RFAG…GGAT), and 853 to 885 (TAVH…DFGR). A compositionally biased stretch (gly residues) spans 59 to 68 (GSGGHSGGGN). The segment covering 445–488 (SSSATVSTTGVVSTTTISHHQQQQQQQQQQQQQQQQQHQQQQQH) has biased composition (low complexity). Positions 520-532 (IKREPEDLRKDPK) are enriched in basic and acidic residues. Low complexity-rich tracts occupy residues 533 to 546 (NGNI…NGPG) and 567 to 596 (PSTP…GSPG). Gly residues predominate over residues 626-642 (GAGGGAGPAGAAGGGGV). Positions 749–772 (QQQQQQQQHQQQQQQQQHHQQQQH) are enriched in low complexity. The span at 853-877 (TAVHGSQNSPTTSLVDTSTNGSTRS) shows a compositional bias: polar residues. The region spanning 899–1125 (TNVGFRYHLE…DFAKPPVLFS (227 aa)) is the Grh/CP2 DB domain.

This sequence belongs to the grh/CP2 family. Grainyhead subfamily. As to expression, restricted, during embryogenesis, to tissues derived from ectoderm, predominantly the central nervous system (CNS) and the epidermis.

The protein localises to the nucleus. Functionally, transcription factor that binds a CNS-specific regulatory element of the Dopa decarboxylase (Ddc) gene. Also interacts with sequences adjacent to other transcription units, including Ultrabithorax (Ubx) and engrailed (en). Activity in vivo may be required only at high levels transiently to activate the expression of Ddc in the CNS. This is Protein grainyhead (grh) from Drosophila melanogaster (Fruit fly).